The chain runs to 229 residues: Large ribosomal subunit protein uL1 (229 aa).

The protein belongs to the universal ribosomal protein uL1 family. As to quaternary structure, part of the 50S ribosomal subunit.

Its function is as follows. Binds directly to 23S rRNA. The L1 stalk is quite mobile in the ribosome, and is involved in E site tRNA release. Protein L1 is also a translational repressor protein, it controls the translation of the L11 operon by binding to its mRNA. This chain is Large ribosomal subunit protein uL1, found in Streptococcus sanguinis (strain SK36).